We begin with the raw amino-acid sequence, 59 residues long: UPF0434 protein LHK_01103 (59 aa).

It belongs to the UPF0434 family.

The protein is UPF0434 protein LHK_01103 of Laribacter hongkongensis (strain HLHK9).